A 133-amino-acid polypeptide reads, in one-letter code: Small ribosomal subunit protein eS8 (133 aa).

The segment at 1–22 is disordered; that stretch reads MGFYQGPDNRKITGGLKGKHRD.

It belongs to the eukaryotic ribosomal protein eS8 family. Part of the 30S ribosomal subunit.

The protein is Small ribosomal subunit protein eS8 of Saccharolobus islandicus (strain M.14.25 / Kamchatka #1) (Sulfolobus islandicus).